Reading from the N-terminus, the 468-residue chain is Methionine aminopeptidase 2 (468 aa).

Residues 1–10 (MGSKTFEGEG) are compositionally biased toward basic and acidic residues. A disordered region spans residues 1–106 (MGSKTFEGEG…PPRVPLDDLF (106 aa)). Positions 16 to 25 (DPSNSTSPNS) are enriched in polar residues. Residues 31–40 (RGAHLSRDGD) show a composition bias toward basic and acidic residues. The span at 46–56 (GDGDDGADGDE) shows a compositional bias: acidic residues. A compositionally biased stretch (polar residues) spans 61-75 (VTTTPLTEQQPSSET). Positions 78 to 90 (KKKKRRKPKKKIS) are enriched in basic residues. A substrate-binding site is contributed by His-219. Residues Asp-240, Asp-251, and His-320 each contribute to the a divalent metal cation site. Residue His-328 participates in substrate binding. A divalent metal cation-binding residues include Glu-353 and Glu-449.

This sequence belongs to the peptidase M24A family. Methionine aminopeptidase eukaryotic type 2 subfamily. Co(2+) serves as cofactor. Requires Zn(2+) as cofactor. It depends on Mn(2+) as a cofactor. The cofactor is Fe(2+).

The protein resides in the cytoplasm. The enzyme catalyses Release of N-terminal amino acids, preferentially methionine, from peptides and arylamides.. Its function is as follows. Cotranslationally removes the N-terminal methionine from nascent proteins. The N-terminal methionine is often cleaved when the second residue in the primary sequence is small and uncharged (Met-Ala-, Cys, Gly, Pro, Ser, Thr, or Val). This Aspergillus oryzae (strain ATCC 42149 / RIB 40) (Yellow koji mold) protein is Methionine aminopeptidase 2.